A 444-amino-acid chain; its full sequence is Platelet-activating factor acetylhydrolase (444 aa).

A signal peptide spans 1–21 (MLPPKLHALFCLCSCLTLVHP). Residues asparagine 60 and asparagine 200 are each glycosylated (N-linked (GlcNAc...) asparagine). The active-site Nucleophile is serine 274. Residues aspartate 297 and histidine 352 each act as charge relay system in the active site. Residue asparagine 424 is glycosylated (N-linked (GlcNAc...) asparagine).

It belongs to the AB hydrolase superfamily. Lipase family. Post-translationally, N-glycosylated. In terms of tissue distribution, plasma.

It is found in the secreted. The protein localises to the extracellular space. It catalyses the reaction a 1-O-alkyl-2-acetyl-sn-glycero-3-phosphocholine + H2O = a 1-O-alkyl-sn-glycero-3-phosphocholine + acetate + H(+). It carries out the reaction 1-O-decyl-2-acetyl-sn-glycero-3-phosphocholine + H2O = 1-O-decyl-sn-glycero-3-phosphocholine + acetate + H(+). The enzyme catalyses 1-O-dodecyl-2-acetyl-sn-glycero-3-phosphocholine + H2O = 1-O-dodecyl-sn-glycero-3-phosphocholine + acetate + H(+). The catalysed reaction is 1-O-tetradecyl-2-acetyl-sn-glycero-3-phosphocholine + H2O = 1-O-tetradecyl-sn-glycero-3-phosphocholine + acetate + H(+). It catalyses the reaction 1-O-hexadecyl-2-acetyl-sn-glycero-3-phosphocholine + H2O = 1-O-hexadecyl-sn-glycero-3-phosphocholine + acetate + H(+). It carries out the reaction 1-O-octadecyl-2-acetyl-sn-glycero-3-phosphocholine + H2O = 1-O-octadecyl-sn-glycero-3-phosphocholine + acetate + H(+). The enzyme catalyses 1-hexadecanoyl-2-acetyl-sn-glycero-3-phosphocholine + H2O = 1-hexadecanoyl-sn-glycero-3-phosphocholine + acetate + H(+). The catalysed reaction is 1-hexadecanoyl-2-propionyl-sn-glycero-3-phosphocholine + H2O = propanoate + 1-hexadecanoyl-sn-glycero-3-phosphocholine + H(+). It catalyses the reaction 1-hexadecanoyl-2-butanoyl-sn-glycero-3-phosphocholine + H2O = butanoate + 1-hexadecanoyl-sn-glycero-3-phosphocholine + H(+). It carries out the reaction 1-hexadecanoyl-2-pentanoyl-sn-glycero-3-phosphocholine + H2O = pentanoate + 1-hexadecanoyl-sn-glycero-3-phosphocholine + H(+). The enzyme catalyses 1-hexadecanoyl-2-glutaroyl-sn-glycero-3-phosphocholine + H2O = glutarate + 1-hexadecanoyl-sn-glycero-3-phosphocholine + H(+). The catalysed reaction is 1-hexadecanoyl-2-(5-oxopentanoyl)-sn-glycero-3-phosphocholine + H2O = 5-oxopentanoate + 1-hexadecanoyl-sn-glycero-3-phosphocholine + H(+). It catalyses the reaction 1-hexadecanoyl-2-(9-oxononanoyl)-sn-glycero-3-phosphocholine + H2O = 9-oxononanoate + 1-hexadecanoyl-sn-glycero-3-phosphocholine + H(+). It carries out the reaction 1-hexadecanoyl-2-[9-hydroperoxy-(10E-octadecenoyl)]-sn-glycero-3-phosphocholine + H2O = 9-hydroperoxy-10E-octadecenoate + 1-hexadecanoyl-sn-glycero-3-phosphocholine + H(+). The enzyme catalyses 1-hexadecanoyl-2-(10-hydroperoxy-8E-octadecenoyl)-sn-glycero-3-phosphocholine + H2O = 10-hydroperoxy-(8E)-octadecenoate + 1-hexadecanoyl-sn-glycero-3-phosphocholine + H(+). In terms of biological role, lipoprotein-associated calcium-independent phospholipase A2 involved in phospholipid catabolism during inflammatory and oxidative stress response. At the lipid-aqueous interface, hydrolyzes the ester bond of fatty acyl group attached at sn-2 position of phospholipids (phospholipase A2 activity). Specifically targets phospholipids with a short-chain fatty acyl group at sn-2 position. Can hydrolyze phospholipids with long fatty acyl chains, only if they carry oxidized functional groups. Hydrolyzes and inactivates platelet-activating factor (PAF, 1-O-alkyl-2-acetyl-sn-glycero-3-phosphocholine), a potent pro-inflammatory signaling lipid that acts through PTAFR on various innate immune cells. Hydrolyzes oxidatively truncated phospholipids carrying an aldehyde group at omega position, preventing their accumulation in low-density lipoprotein (LDL) particles and uncontrolled pro-inflammatory effects. As part of high-density lipoprotein (HDL) particles, can hydrolyze phospholipids having long-chain fatty acyl hydroperoxides at sn-2 position and protect against potential accumulation of these oxylipins in the vascular wall. Catalyzes the release from membrane phospholipids of F2-isoprostanes, lipid biomarkers of cellular oxidative damage. The chain is Platelet-activating factor acetylhydrolase (PLA2G7) from Canis lupus familiaris (Dog).